The following is a 327-amino-acid chain: Protein UL95 homolog (327 aa).

Belongs to the herpesviridae UL95 family. Interacts with ORF24; this interaction may serve as a core scaffold for the assembly of the viral transcription initiation complex. Interacts with ORF66. Interacts with ORF18. Interacts with ORF23. Interacts with ORF31. Interacts with host EPAS1; this interaction stabilizes host EPAS1, ensuring its transcriptional activity.

It localises to the host nucleus. Functionally, participates in the expression of late viral mRNAs in part by interacting with ORF24. Expressed before viral DNA replication, assembles at the viral pre-replication complexes (pre-RCs) and thus serves as a hub for recruiting a viral transcription complex to ORF24 to promote late viral gene expression. Also plays a regulatory role in the viral life cycle by regulating host transcriptional regulators HIF1A and EPAS1. This Homo sapiens (Human) protein is Protein UL95 homolog (ORF34).